The sequence spans 263 residues: 3'-5' ssDNA/RNA exonuclease TatD (263 aa).

The a divalent metal cation site is built by E92, H128, and H153.

Belongs to the metallo-dependent hydrolases superfamily. TatD-type hydrolase family. TatD subfamily. As to quaternary structure, monomer. Requires Mg(2+) as cofactor.

The protein resides in the cytoplasm. Its function is as follows. 3'-5' exonuclease that prefers single-stranded DNA and RNA. May play a role in the H(2)O(2)-induced DNA damage repair. This chain is 3'-5' ssDNA/RNA exonuclease TatD, found in Rahnella sp. (strain Y9602).